The following is a 485-amino-acid chain: NADH-quinone oxidoreductase subunit N (485 aa).

14 consecutive transmembrane segments (helical) span residues 3–23 (LFMPEIIILITALLVIITDLF), 30–50 (HLAYLSLLGLGAAAVATVLNW), 67–87 (YASFFRILFISLSGLVIMASV), 96–116 (FQGEYYALVLLALLGMIMMAS), 120–140 (LITMYLSLELAGLAFYVLVGF), 154–174 (LLLGGVASAMLVFGLVLIYGF), 202–222 (FILGIILTITGLGFKVAAVPF), 247–267 (AAGFALFLRLFYTVFTDPLAL), 271–291 (WALIVAVLATAGMTLGNVLAI), 299–319 (MLGYSSIAHAGYILVALAAVG), 332–352 (LFYLVAFAVSDLVAFVSIIAI), 375–395 (ASALTLALLSLTGFPPLAGFL), 411–431 (WLMIVAAVNTVISAVFYFNVI), and 453–473 (LALGISGLAVLIFGIIPETLL).

The protein belongs to the complex I subunit 2 family. NDH-1 is composed of 14 different subunits. Subunits NuoA, H, J, K, L, M, N constitute the membrane sector of the complex.

The protein resides in the cell membrane. The enzyme catalyses a quinone + NADH + 5 H(+)(in) = a quinol + NAD(+) + 4 H(+)(out). Its function is as follows. NDH-1 shuttles electrons from NADH, via FMN and iron-sulfur (Fe-S) centers, to quinones in the respiratory chain. The immediate electron acceptor for the enzyme in this species is believed to be ubiquinone. Couples the redox reaction to proton translocation (for every two electrons transferred, four hydrogen ions are translocated across the cytoplasmic membrane), and thus conserves the redox energy in a proton gradient. The chain is NADH-quinone oxidoreductase subunit N from Dehalococcoides mccartyi (strain ATCC BAA-2100 / JCM 16839 / KCTC 5957 / BAV1).